A 207-amino-acid polypeptide reads, in one-letter code: Superoxide dismutase [Mn] (207 aa).

The Mn(2+) site is built by His28, His76, Asp160, and His164.

Belongs to the iron/manganese superoxide dismutase family. Requires Mn(2+) as cofactor.

It catalyses the reaction 2 superoxide + 2 H(+) = H2O2 + O2. Destroys superoxide anion radicals which are normally produced within the cells and which are toxic to biological systems. The chain is Superoxide dismutase [Mn] (sodA) from Mycobacterium lepraemurium.